A 616-amino-acid polypeptide reads, in one-letter code: 2-isopropylmalate synthase (616 aa).

The tract at residues 1-34 is disordered; it reads MSPNDAFISAPAKIETPVGPRNEGQPAWNKQRGS. The Pyruvate carboxyltransferase domain maps to 67-341; that stretch reads PQWCAVDLRD…DPQLDFTDIR (275 aa). Positions 76, 280, 282, and 316 each coordinate Mg(2+). Positions 490 to 616 are regulatory domain; sequence RTAPVEQIAL…NHEAVLAGGV (127 aa).

It belongs to the alpha-IPM synthase/homocitrate synthase family. LeuA type 2 subfamily. In terms of assembly, homodimer. The cofactor is Mg(2+).

It is found in the cytoplasm. It catalyses the reaction 3-methyl-2-oxobutanoate + acetyl-CoA + H2O = (2S)-2-isopropylmalate + CoA + H(+). It participates in amino-acid biosynthesis; L-leucine biosynthesis; L-leucine from 3-methyl-2-oxobutanoate: step 1/4. Inhibited by L-leucine, the pathway end product. Its function is as follows. Catalyzes the condensation of the acetyl group of acetyl-CoA with 3-methyl-2-oxobutanoate (2-ketoisovalerate) to form 3-carboxy-3-hydroxy-4-methylpentanoate (2-isopropylmalate). Complements an E.coli leuA deletion. This chain is 2-isopropylmalate synthase, found in Corynebacterium glutamicum (strain ATCC 13032 / DSM 20300 / JCM 1318 / BCRC 11384 / CCUG 27702 / LMG 3730 / NBRC 12168 / NCIMB 10025 / NRRL B-2784 / 534).